A 574-amino-acid chain; its full sequence is R-linalool synthase, chloroplastic (574 aa).

The N-terminal 40 residues, 1–40 (MSCARITVTLPYRSAKTSIQRGITHCPALLRPRFSACTPL), are a transit peptide targeting the chloroplast. Residues 52–61 (INGDNSPLKN) are compositionally biased toward polar residues. The tract at residues 52-71 (INGDNSPLKNTHQHVEERSS) is disordered. (2E)-geranyl diphosphate-binding residues include Arg-287, Asp-324, Asp-328, Arg-467, and Asp-470. Mg(2+) contacts are provided by Asp-324 and Asp-328. A DDXXD motif motif is present at residues 324–328 (DDIFD). Asp-470, Thr-474, and Glu-478 together coordinate Mg(2+).

This sequence belongs to the terpene synthase family. Tpsb subfamily. Requires Mg(2+) as cofactor. It depends on Mn(2+) as a cofactor.

The protein localises to the plastid. The protein resides in the chloroplast. The catalysed reaction is (2E)-geranyl diphosphate + H2O = (R)-linalool + diphosphate. Its pathway is secondary metabolite biosynthesis; terpenoid biosynthesis. Functionally, monoterpene synthase that catalyzes the formation of (3R)-linalool from geranyl diphosphate. The protein is R-linalool synthase, chloroplastic (LIS) of Ocimum basilicum (Sweet basil).